The following is a 757-amino-acid chain: Transcription regulator rua1 (757 aa).

Disordered stretches follow at residues 122–169 (SSGS…LPVS), 181–218 (NHQV…SNQD), 237–295 (RNTG…NGYT), 372–393 (SADC…PYPL), and 422–582 (MELQ…IGNA). The segment covering 125–165 (SATKSEPSTCSSSTDFSMSSTADASTAPQHSSSGDSSMSSG) has biased composition (low complexity). 2 stretches are compositionally biased toward polar residues: residues 181-190 (NHQVTTQDAS) and 200-218 (QPPS…SNQD). Residues 240–249 (GHRQHNRHQK) show a composition bias toward basic residues. Residues 253–277 (LPQGQSCTNSGSSSRQVTRPNSPNH) are compositionally biased toward polar residues. The segment covering 379–393 (PRPPSNSPEPHPYPL) has biased composition (pro residues). A compositionally biased stretch (polar residues) spans 428-437 (PARSNSTFGR). The segment covering 439–453 (SQRHHQPPPSHRQRS) has biased composition (basic residues). Low complexity-rich tracts occupy residues 454-465 (RTSASSISNTNA), 494-510 (ASQS…ATDA), and 543-582 (TSSS…IGNA). The C2H2-type 1 degenerate zinc finger occupies 661-692 (REGWCSLCPQGEWYSMKRSQYLYHMQFDHGIS). The C2H2-type 2; degenerate zinc-finger motif lies at 717–750 (GLCHHCNKWIPICFGPQRKRDFKAWFKHARKCHR).

The protein resides in the nucleus. Functionally, transcription factor; part of the gene cluster that mediates the biosynthesis of the glycolipid biosurfactant ustilagic acid (UA). UA is a secreted cellobiose glycolipid that is toxic for many microorganisms and confers biocontrol activity to U.maydis. Recognizes and binds to the specific 5'-T/G-G/T-C-G-C-A-T-A/T-C/T-C/T-G/A-3' upstream activating sequence found in all promoters of the UA biosynthesis genes. This Mycosarcoma maydis (Corn smut fungus) protein is Transcription regulator rua1.